A 916-amino-acid chain; its full sequence is Internalin J (916 aa).

A signal peptide spans 1 to 25 (MKTSKIIIASLVSLTLVSNPILTFA). LRR repeat units lie at residues 94–115 (TLTS…EKLT), 116–136 (GLTK…SQNT), 137–157 (NLTY…TPLT), 158–179 (KLTY…QNPL), 180–200 (LTYL…HNTQ), 201–221 (LTEL…TPQT), 222–243 (QLTT…QNKL), 244–263 (LNRL…NQNI), 264–284 (QLTF…TPLT), 285–306 (QLTY…TLSK), 316–325 (DLLEIDLTHN), 338–357 (KIKE…DCQA), 359–368 (GITELDLSQN), and 380–402 (ELTK…NAHI). MucBP domains lie at 506 to 568 (PIKG…SQSV), 576 to 638 (IVAA…SQTV), 646 to 708 (IVAA…AQTV), 717 to 779 (APEK…SQTV), and 787 to 849 (IVAA…AQTV). The tract at residues 862–888 (PLPDKKTTKPSNLKTTEVKKASDTLPK) is disordered. The short motif at 886–890 (LPKTG) is the LPXTG sorting signal element. Thr889 is modified (pentaglycyl murein peptidoglycan amidated threonine). The propeptide at 890 to 916 (GDSTPWKSALLGVFLSSTALVIWKKKK) is removed by sortase.

It belongs to the internalin family.

Its subcellular location is the secreted. It is found in the cell wall. Involved in several steps of L.monocytogenes infection, probably improves adhesin to host cells. The polypeptide is Internalin J (inlJ) (Listeria monocytogenes serotype 4b (strain F2365)).